Reading from the N-terminus, the 371-residue chain is 4-hydroxybenzoate polyprenyltransferase, mitochondrial (371 aa).

Residues 1 to 34 constitute a mitochondrion transit peptide; the sequence is MLGSRAAGFARGLRAVALAWLPGWRGRSFALARA. Over 35–83 the chain is Mitochondrial matrix; that stretch reads AGAPHGGDLQPPACPEPRGRQLSLSAAAVVDSAPRPLQPYLRLMRLDKP. Residues 84 to 104 traverse the membrane as a helical segment; the sequence is IGTWLLYLPCTWSIGLAAEPG. Over 105 to 108 the chain is Mitochondrial intermembrane; that stretch reads CFPD. A helical membrane pass occupies residues 109 to 129; it reads WYMLSLFGTGAILMRGAGCTI. Over 130-148 the chain is Mitochondrial matrix; sequence NDMWDQDYDKKVTRTANRP. The helical transmembrane segment at 149 to 169 threads the bilayer; sequence IAAGDISTFQSFVFLGGQLTL. Topologically, residues 170–172 are mitochondrial intermembrane; it reads ALG. Residues 173-193 traverse the membrane as a helical segment; that stretch reads VLLCLNYYSIALGAGSLLLVI. At 194 to 203 the chain is on the mitochondrial matrix side; it reads TYPLMKRISY. A helical transmembrane segment spans residues 204 to 224; that stretch reads WPQLALGLTFNWGALLGWSAI. The Mitochondrial intermembrane portion of the chain corresponds to 225–231; sequence KGSCDPS. The helical transmembrane segment at 232-252 threads the bilayer; sequence VCLPLYFSGVMWTLIYDTIYA. Residues 253 to 277 are Mitochondrial matrix-facing; sequence HQDKRDDVLIGLKSTALRFGENTKP. Residues 278 to 298 form a helical membrane-spanning segment; it reads WLSGFSVAMLGALSLVGVNSG. The Mitochondrial intermembrane segment spans residues 299 to 300; that stretch reads QT. The helical transmembrane segment at 301–321 threads the bilayer; that stretch reads APYYAALGAVGAHLTHQIYTL. Residues 322-332 lie on the Mitochondrial matrix side of the membrane; sequence DIHRPEDCWNK. A helical transmembrane segment spans residues 333–353; it reads FISNRTLGLIVFLGIVLGNLW. Residues 354-371 lie on the Mitochondrial intermembrane side of the membrane; sequence KEKKTDKTKKGIENKIEN.

The protein belongs to the UbiA prenyltransferase family. Requires Mg(2+) as cofactor. Widely expressed. Present in all of the tissues tested. Expressed at higher level in skeletal muscle, adrenal glands and the heart.

The protein localises to the mitochondrion inner membrane. The enzyme catalyses an all-trans-polyprenyl diphosphate + 4-hydroxybenzoate = a 4-hydroxy-3-(all-trans-polyprenyl)benzoate + diphosphate. It carries out the reaction all-trans-decaprenyl diphosphate + 4-hydroxybenzoate = 4-hydroxy-3-(all-trans-decaprenyl)benzoate + diphosphate. It catalyses the reaction all-trans-nonaprenyl diphosphate + 4-hydroxybenzoate = 4-hydroxy-3-(all-trans-nonaprenyl)benzoate + diphosphate. The protein operates within cofactor biosynthesis; ubiquinone biosynthesis. Functionally, mediates the second step in the final reaction sequence of coenzyme Q (CoQ) biosynthesis. Catalyzes the prenylation of para-hydroxybenzoate (PHB) with an all-trans polyprenyl donor (such as all-trans-decaprenyl diphosphate). The length of the polyprenyl side chain varies depending on the species, in humans, the side chain is comprised of 10 isoprenyls (decaprenyl) producing CoQ10 (also known as ubiquinone), whereas rodents predominantly generate CoQ9. However, this specificity is not complete, human tissues have low amounts of CoQ9 and rodent organs contain some CoQ10. Plays a central role in the biosynthesis of CoQ10. CoQ10 is a vital molecule that transports electrons from mitochondrial respiratory chain complexes. CoQs also function as cofactors for uncoupling protein and play a role as regulators of the extracellularly-induced ceramide-dependent apoptotic pathway. Regulates mitochondrial permeability transition pore (mPTP) opening and ROS production (pivotal events in cell death) in a tissue specific manner. The polypeptide is 4-hydroxybenzoate polyprenyltransferase, mitochondrial (Homo sapiens (Human)).